The primary structure comprises 476 residues: Proline--tRNA ligase (476 aa).

The protein belongs to the class-II aminoacyl-tRNA synthetase family. ProS type 3 subfamily. Homodimer.

The protein localises to the cytoplasm. It catalyses the reaction tRNA(Pro) + L-proline + ATP = L-prolyl-tRNA(Pro) + AMP + diphosphate. Catalyzes the attachment of proline to tRNA(Pro) in a two-step reaction: proline is first activated by ATP to form Pro-AMP and then transferred to the acceptor end of tRNA(Pro). The protein is Proline--tRNA ligase of Mycoplasma mobile (strain ATCC 43663 / 163K / NCTC 11711) (Mesomycoplasma mobile).